The chain runs to 111 residues: WAP four-disulfide core domain protein 12 (111 aa).

The N-terminal stretch at 1-23 (MGSSSFLVLMVSLVLVTLVAVEG) is a signal peptide. Residues 27–74 (GIEKAGVCPADNVRCFKSDPPQCHTDQDCLGERKCCYLHCGFKCVIPV) enclose the WAP domain. 4 disulfides stabilise this stretch: Cys-34/Cys-62, Cys-41/Cys-66, Cys-49/Cys-61, and Cys-55/Cys-70. The segment at 80–111 (GGNKDEDVSRPYPEPGWEAKCPGSSSTRCPQK) is disordered. The span at 102-111 (GSSSTRCPQK) shows a compositional bias: polar residues.

As to expression, highly expressed in prostate, skin, lung and esophagus. Weakly expressed in skeletal muscle, epididymis, kidney, trachea, salivary gland, testis and seminal vesicle.

Its subcellular location is the secreted. In terms of biological role, antibacterial protein. Putative acid-stable proteinase inhibitor. This Homo sapiens (Human) protein is WAP four-disulfide core domain protein 12 (WFDC12).